The chain runs to 701 residues: Elongation factor G (701 aa).

Positions 8–290 (ARYRNIGISA…AVIEYLPAPT (283 aa)) constitute a tr-type G domain. GTP contacts are provided by residues 17 to 24 (AHIDAGKT), 88 to 92 (DTPGH), and 142 to 145 (NKMD).

It belongs to the TRAFAC class translation factor GTPase superfamily. Classic translation factor GTPase family. EF-G/EF-2 subfamily.

The protein resides in the cytoplasm. Catalyzes the GTP-dependent ribosomal translocation step during translation elongation. During this step, the ribosome changes from the pre-translocational (PRE) to the post-translocational (POST) state as the newly formed A-site-bound peptidyl-tRNA and P-site-bound deacylated tRNA move to the P and E sites, respectively. Catalyzes the coordinated movement of the two tRNA molecules, the mRNA and conformational changes in the ribosome. In Sodalis glossinidius (strain morsitans), this protein is Elongation factor G.